Here is a 217-residue protein sequence, read N- to C-terminus: N-(5'-phosphoribosyl)anthranilate isomerase (217 aa).

This sequence belongs to the TrpF family.

It carries out the reaction N-(5-phospho-beta-D-ribosyl)anthranilate = 1-(2-carboxyphenylamino)-1-deoxy-D-ribulose 5-phosphate. It functions in the pathway amino-acid biosynthesis; L-tryptophan biosynthesis; L-tryptophan from chorismate: step 3/5. This Chlorobium chlorochromatii (strain CaD3) protein is N-(5'-phosphoribosyl)anthranilate isomerase.